The chain runs to 754 residues: 5-methyltetrahydropteroyltriglutamate--homocysteine methyltransferase (754 aa).

Residues 17 to 20 (RELK) and Lys-117 each bind 5-methyltetrahydropteroyltri-L-glutamate. L-homocysteine-binding positions include 431–433 (IGS) and Glu-484. L-methionine-binding positions include 431-433 (IGS) and Glu-484. 5-methyltetrahydropteroyltri-L-glutamate-binding positions include 515–516 (RC) and Trp-561. Asp-599 is an L-homocysteine binding site. Asp-599 lines the L-methionine pocket. Glu-605 provides a ligand contact to 5-methyltetrahydropteroyltri-L-glutamate. Zn(2+) contacts are provided by His-641, Cys-643, and Glu-665. His-694 (proton donor) is an active-site residue. Residue Cys-726 coordinates Zn(2+).

It belongs to the vitamin-B12 independent methionine synthase family. The cofactor is Zn(2+).

It carries out the reaction 5-methyltetrahydropteroyltri-L-glutamate + L-homocysteine = tetrahydropteroyltri-L-glutamate + L-methionine. Its pathway is amino-acid biosynthesis; L-methionine biosynthesis via de novo pathway; L-methionine from L-homocysteine (MetE route): step 1/1. Functionally, catalyzes the transfer of a methyl group from 5-methyltetrahydrofolate to homocysteine resulting in methionine formation. This is 5-methyltetrahydropteroyltriglutamate--homocysteine methyltransferase from Salmonella paratyphi A (strain ATCC 9150 / SARB42).